A 31-amino-acid polypeptide reads, in one-letter code: Branched-chain-amino-acid aminotransferase, mitochondrial (31 aa).

A mitochondrion-targeting transit peptide spans 1 to 27 (MAAAALRQIWARKFLPVPWLLCGPRRY).

Belongs to the class-IV pyridoxal-phosphate-dependent aminotransferase family. Homodimer. Requires pyridoxal 5'-phosphate as cofactor.

Its subcellular location is the mitochondrion. It carries out the reaction L-leucine + 2-oxoglutarate = 4-methyl-2-oxopentanoate + L-glutamate. It catalyses the reaction L-isoleucine + 2-oxoglutarate = (S)-3-methyl-2-oxopentanoate + L-glutamate. The catalysed reaction is L-valine + 2-oxoglutarate = 3-methyl-2-oxobutanoate + L-glutamate. Functionally, catalyzes the first reaction in the catabolism of the essential branched chain amino acids leucine, isoleucine, and valine. May also function as a transporter of branched chain alpha-keto acids. This Sus scrofa (Pig) protein is Branched-chain-amino-acid aminotransferase, mitochondrial (BCAT2).